A 476-amino-acid chain; its full sequence is Glutamate--tRNA ligase (476 aa).

The 'HIGH' region signature appears at 9 to 19 (PSPTGTLHLGT). The short motif at 248–252 (KLSKR) is the 'KMSKS' region element. Lys251 lines the ATP pocket.

It belongs to the class-I aminoacyl-tRNA synthetase family. Glutamate--tRNA ligase type 1 subfamily. In terms of assembly, monomer.

It localises to the cytoplasm. It carries out the reaction tRNA(Glu) + L-glutamate + ATP = L-glutamyl-tRNA(Glu) + AMP + diphosphate. Catalyzes the attachment of glutamate to tRNA(Glu) in a two-step reaction: glutamate is first activated by ATP to form Glu-AMP and then transferred to the acceptor end of tRNA(Glu). The polypeptide is Glutamate--tRNA ligase (Prochlorococcus marinus (strain NATL1A)).